The following is a 358-amino-acid chain: Peptide chain release factor 1 (358 aa).

Glutamine 234 bears the N5-methylglutamine mark.

The protein belongs to the prokaryotic/mitochondrial release factor family. Post-translationally, methylated by PrmC. Methylation increases the termination efficiency of RF1.

It localises to the cytoplasm. Peptide chain release factor 1 directs the termination of translation in response to the peptide chain termination codons UAG and UAA. This Akkermansia muciniphila (strain ATCC BAA-835 / DSM 22959 / JCM 33894 / BCRC 81048 / CCUG 64013 / CIP 107961 / Muc) protein is Peptide chain release factor 1.